The primary structure comprises 267 residues: MATKLISPPLSCPWVTSREVIIKGLPRRRREWMVTKRNRVSAVTAMIVEPLSVVSSSAIQIHQWWEQNPNSLLLMTEATGGYSLASYYTSLGLFVISVPGLWSLIKRSVKSKIVRKTFVVNDVKKEPKQVAGEILSFFTRKNFNITDRGETITFEGKMVPSRGQAALLTFCTCISLASVGLVLTITVPDFGNNWFFIILLSPLAGVYYWKKASRKEEIKVKMMVGSKGRLDEIVVQGDDVQVEEMRKELQLNEKGMVYVKGLFERSS.

The N-terminal 44 residues, 1-44, are a transit peptide targeting the chloroplast; it reads MATKLISPPLSCPWVTSREVIIKGLPRRRREWMVTKRNRVSAVT. The Lumenal portion of the chain corresponds to 45–84; sequence AMIVEPLSVVSSSAIQIHQWWEQNPNSLLLMTEATGGYSL. A helical transmembrane segment spans residues 85 to 105; that stretch reads ASYYTSLGLFVISVPGLWSLI. Over 106–164 the chain is Stromal; that stretch reads KRSVKSKIVRKTFVVNDVKKEPKQVAGEILSFFTRKNFNITDRGETITFEGKMVPSRGQ. A helical transmembrane segment spans residues 165-185; the sequence is AALLTFCTCISLASVGLVLTI. Threonine 186 is a topological domain (lumenal). Residues 187 to 207 form a helical membrane-spanning segment; it reads VPDFGNNWFFIILLSPLAGVY. At 208-267 the chain is on the stromal side; the sequence is YWKKASRKEEIKVKMMVGSKGRLDEIVVQGDDVQVEEMRKELQLNEKGMVYVKGLFERSS.

It is found in the plastid. The protein resides in the chloroplast thylakoid membrane. Functionally, required for the biogenesis and accumulation of native cytochrome b6 in the thylakoid membrane. Controls the conversion of apocytochrome b6 to holocytochrome b6. Required for covalent binding of the c-type heme to cytochrome b6. The polypeptide is Protein COFACTOR ASSEMBLY OF COMPLEX C SUBUNIT B CCB1, chloroplastic (Arabidopsis thaliana (Mouse-ear cress)).